The primary structure comprises 314 residues: Basic leucine zipper 63 (314 aa).

Ser-29 carries the post-translational modification Phosphoserine; by KIN10. Positions 94–177 (KPQDTSGRSD…SRRRKQAHLS (84 aa)) are disordered. Residues 96–133 (QDTSGRSDNGGANESEQASLASSKATPMMSSAITSGSE) are compositionally biased toward polar residues. Residues 151–214 (NVKRVKRMLS…NDASVENRVL (64 aa)) form the bZIP domain. Residues 153–172 (KRVKRMLSNRESARRSRRRK) form a basic motif region. Positions 155–162 (VKRMLSNR) match the Nuclear localization signal 1 motif. The tract at residues 179–193 (LETQVSQLRVENSKL) is leucine-zipper. The interval 253 to 274 (SLPSETSNSPDTTSSQVTTPEI) is disordered. Ser-294 and Ser-300 each carry phosphoserine; by KIN10. The Nuclear localization signal 2 motif lies at 295–302 (MRRVESLE).

It belongs to the bZIP family. In terms of assembly, homodimer. Forms a heterodimer with LSD1, BZIP1, BZIP2, BZIP9, BZIP10, BZIP11, BZIP25, BZIP44 and BZIP53. Interacts with KIN10 and SNF4. Component of a ternary complex composed of BZIP2-BZIP63 heterodimer and KIN10. Post-translationally, phosphorylated. The phosphorylation at Ser-29, Ser-294 and Ser-300 by KIN10 strongly enhances its ability to form homo- as well as heterodimers and are then essential for its transcriptional activity. In terms of tissue distribution, expressed in roots, shoots, young leaves, pollen, and flowers.

The protein localises to the nucleus. Up-regulated by KIN10 under a phosphorylation-dependent manner. In terms of biological role, transcription factor involved in controlling responses to starvation. BZIP2-BZIP63-KIN10 complex binds to the ETFQO promoter to up-regulate its transcription. This chain is Basic leucine zipper 63 (BZIP63), found in Arabidopsis thaliana (Mouse-ear cress).